The following is a 151-amino-acid chain: MPVDPEKLAKLQQGAAKKVGGQRVKAKKVKSEQDDTKLMEALGKLKATKVNAVEEANFFKEDGKVLHFKRVGVQSAAQHNVCAFTGYPQEKDVTQLIPQILPQLGAENLEILRQLAEQIQAGKTPSMGGENAGADEDIPDLIEGQKFDEVE.

An NAC-A/B domain is found at 32 to 97 (EQDDTKLMEA…PQEKDVTQLI (66 aa)). The disordered stretch occupies residues 122 to 151 (GKTPSMGGENAGADEDIPDLIEGQKFDEVE).

It belongs to the NAC-beta family. In terms of assembly, part of the nascent polypeptide-associated complex (NAC), consisting of EGD2 and EGD1. NAC associates with ribosomes via EGD1.

The protein resides in the cytoplasm. It is found in the nucleus. In terms of biological role, component of the nascent polypeptide-associated complex (NAC), a dynamic component of the ribosomal exit tunnel, protecting the emerging polypeptides from interaction with other cytoplasmic proteins to ensure appropriate nascent protein targeting. The NAC complex also promotes mitochondrial protein import by enhancing productive ribosome interactions with the outer mitochondrial membrane and blocks the inappropriate interaction of ribosomes translating non-secretory nascent polypeptides with translocation sites in the membrane of the endoplasmic reticulum. EGD1 may act as a transcription factor that exert a negative effect on the expression of several genes that are transcribed by RNA polymerase II. This Meyerozyma guilliermondii (strain ATCC 6260 / CBS 566 / DSM 6381 / JCM 1539 / NBRC 10279 / NRRL Y-324) (Yeast) protein is Nascent polypeptide-associated complex subunit beta (EGD1).